Consider the following 420-residue polypeptide: MKHNLQDNLQGEQMANTNSNGGKKPFSDAKIIERANLLRDNDLYFFFRAIEETEASTVTVKGKKQIMIGSNNYLGLTHHPAVKEAAIKAVEKYGTGCTGSRFLNGNLNIHEELDEKLAAYLGHEKAIVFSTGMQANLGALSAICGPKDLMLFDSENHASIIDASRLSLGTTFKYKHNDMASLEELLESNMSRFNRVIIVADGVFSMTGDILRLPEVVKLAKKYGAYVYVDDAHGLGVMGPQGRGTMAHFDVTKDVDFNMGTFSKSFASIGGVISGSKDAIDYVRHSARSFMFSASMPPAAVATVSACIDVVQNDETILNNLWSNVEFMRNGFKELGFFTYGSQTPIIPLFIGDDMKALKMTKWLESKGVFCTPVLPPAVPKGETLIRTSYMASHNREDLSTVLEVFAEAKKIFDIPNHLH.

Positions 1-21 are enriched in polar residues; sequence MKHNLQDNLQGEQMANTNSNG. Positions 1–25 are disordered; it reads MKHNLQDNLQGEQMANTNSNGGKKP. Pyridoxal 5'-phosphate is bound by residues 132–133, H233, T261, and S263; that span reads GM. K264 is subject to N6-(pyridoxal phosphate)lysine.

Belongs to the class-II pyridoxal-phosphate-dependent aminotransferase family. In terms of assembly, homodimer. It depends on pyridoxal 5'-phosphate as a cofactor.

It localises to the cytoplasm. Its subcellular location is the cell inner membrane. The enzyme catalyses L-serine + hexadecanoyl-CoA + H(+) = 3-oxosphinganine + CO2 + CoA. The protein operates within lipid metabolism; sphingolipid metabolism. Significantly inhibited by palmitoyl-CoA concentrations greater than 100 uM. Catalyzes the condensation of L-serine with palmitoyl-CoA (hexadecanoyl-CoA) to produce 3-oxosphinganine. The sequence is that of Serine palmitoyltransferase from Bacteriovorax stolpii (Bdellovibrio stolpii).